Consider the following 225-residue polypeptide: Endo-1,4-beta-xylanase (225 aa).

The first 31 residues, 1–31 (MVGFTPVALAALAATGALAFPAGNATELEKR), serve as a signal peptide directing secretion. Pyrrolidone carboxylic acid is present on Q32. Positions 32-222 (QTTPNSEGWH…SSGYARITVA (191 aa)) constitute a GH11 domain. The active-site Nucleophile is the E117. The cysteines at positions 141 and 185 are disulfide-linked. The Proton donor role is filled by E209.

It carries out the reaction Endohydrolysis of (1-&gt;4)-beta-D-xylosidic linkages in xylans.. The protein operates within glycan degradation; xylan degradation. The protein is Endo-1,4-beta-xylanase (XYNA) of Thermomyces lanuginosus (Humicola lanuginosa).